We begin with the raw amino-acid sequence, 89 residues long: Small ribosomal subunit protein uS15 (89 aa).

This sequence belongs to the universal ribosomal protein uS15 family. In terms of assembly, part of the 30S ribosomal subunit. Forms a bridge to the 50S subunit in the 70S ribosome, contacting the 23S rRNA.

One of the primary rRNA binding proteins, it binds directly to 16S rRNA where it helps nucleate assembly of the platform of the 30S subunit by binding and bridging several RNA helices of the 16S rRNA. Functionally, forms an intersubunit bridge (bridge B4) with the 23S rRNA of the 50S subunit in the ribosome. The polypeptide is Small ribosomal subunit protein uS15 (Cupriavidus metallidurans (strain ATCC 43123 / DSM 2839 / NBRC 102507 / CH34) (Ralstonia metallidurans)).